A 209-amino-acid chain; its full sequence is Thiamine-phosphate synthase 1 (209 aa).

4-amino-2-methyl-5-(diphosphooxymethyl)pyrimidine is bound by residues 39–43 (QFREK) and Asn-74. Positions 75 and 94 each coordinate Mg(2+). Ser-112 is a binding site for 4-amino-2-methyl-5-(diphosphooxymethyl)pyrimidine. A 2-[(2R,5Z)-2-carboxy-4-methylthiazol-5(2H)-ylidene]ethyl phosphate-binding site is contributed by 138-140 (TQS). Residue Lys-141 participates in 4-amino-2-methyl-5-(diphosphooxymethyl)pyrimidine binding. 2-[(2R,5Z)-2-carboxy-4-methylthiazol-5(2H)-ylidene]ethyl phosphate-binding positions include Gly-170 and 190–191 (IS).

The protein belongs to the thiamine-phosphate synthase family. Requires Mg(2+) as cofactor.

It carries out the reaction 2-[(2R,5Z)-2-carboxy-4-methylthiazol-5(2H)-ylidene]ethyl phosphate + 4-amino-2-methyl-5-(diphosphooxymethyl)pyrimidine + 2 H(+) = thiamine phosphate + CO2 + diphosphate. It catalyses the reaction 2-(2-carboxy-4-methylthiazol-5-yl)ethyl phosphate + 4-amino-2-methyl-5-(diphosphooxymethyl)pyrimidine + 2 H(+) = thiamine phosphate + CO2 + diphosphate. The enzyme catalyses 4-methyl-5-(2-phosphooxyethyl)-thiazole + 4-amino-2-methyl-5-(diphosphooxymethyl)pyrimidine + H(+) = thiamine phosphate + diphosphate. It participates in cofactor biosynthesis; thiamine diphosphate biosynthesis; thiamine phosphate from 4-amino-2-methyl-5-diphosphomethylpyrimidine and 4-methyl-5-(2-phosphoethyl)-thiazole: step 1/1. In terms of biological role, condenses 4-methyl-5-(beta-hydroxyethyl)thiazole monophosphate (THZ-P) and 2-methyl-4-amino-5-hydroxymethyl pyrimidine pyrophosphate (HMP-PP) to form thiamine monophosphate (TMP). In Streptococcus pneumoniae (strain ATCC BAA-255 / R6), this protein is Thiamine-phosphate synthase 1.